The following is a 506-amino-acid chain: AMP phosphorylase (506 aa).

AMP is bound by residues Gly-167, 193-198 (SRAITG), and Thr-202. The Proton donor role is filled by Asp-255. Residues Ser-263 and Lys-287 each contribute to the AMP site.

The protein belongs to the thymidine/pyrimidine-nucleoside phosphorylase family. Type 2 subfamily.

It catalyses the reaction AMP + phosphate = alpha-D-ribose 1,5-bisphosphate + adenine. The catalysed reaction is CMP + phosphate = cytosine + alpha-D-ribose 1,5-bisphosphate. It carries out the reaction UMP + phosphate = alpha-D-ribose 1,5-bisphosphate + uracil. Its function is as follows. Catalyzes the conversion of AMP and phosphate to adenine and ribose 1,5-bisphosphate (R15P). Exhibits phosphorylase activity toward CMP and UMP in addition to AMP. Functions in an archaeal AMP degradation pathway, together with R15P isomerase and RubisCO. This is AMP phosphorylase from Methanosarcina barkeri (strain Fusaro / DSM 804).